Consider the following 412-residue polypeptide: Protein BTN1 (412 aa).

The first 29 residues, 1-29 (MDRRKLIFGKFWLFGLLNNVLYVVILAAA), serve as a signal peptide directing secretion. 9 helical membrane passes run 41–61 (LILL…PFFI), 70–90 (IWSL…GRLG), 91–111 (VCIV…ITFL), 131–151 (GAGL…KIPV), 154–174 (SLLL…LQVE), 234–254 (VLVV…YLIN), 281–300 (IYVA…RSSG), 307–329 (GLYL…SWYY), and 334–356 (VWVI…VNSF).

It belongs to the battenin family.

The protein resides in the vacuole membrane. Involved in vacuolar transport and vacuole pH homeostasis. Also required for cytokinesis. This is Protein BTN1 (BTN1) from Eremothecium gossypii (strain ATCC 10895 / CBS 109.51 / FGSC 9923 / NRRL Y-1056) (Yeast).